Here is a 138-residue protein sequence, read N- to C-terminus: Protein X (138 aa).

The segment at 20–43 (PLRGQPSGPSVSGTSAGSPSSAAS) is disordered. The span at 25–43 (PSGPSVSGTSAGSPSSAAS) shows a compositional bias: low complexity. The segment at 68 to 113 (PCCLGFTCADLRTMDSTVNFVPWHAKRQLGMMQKDFWTAYIRDQLL) is mitochondrial targeting sequence.

This sequence belongs to the orthohepadnavirus protein X family. As to quaternary structure, may form homodimer. May interact with host CEBPA, CFLAR, CREB1, DDB1, E4F1, HBXIP, HSPD1/HSP60, NFKBIA, POLR2E and SMAD4. Interacts with host SMC5-SMC6 complex and induces its degradation. Interacts with host TRPC4AP; leading to prevent ubiquitination of TRPC4AP. Interacts with host PLSCR1; this interaction promotes ubiquitination and degradation of HBx and impairs HBx-mediated cell proliferation. In terms of processing, a fraction may be phosphorylated in insect cells and HepG2 cells, a human hepatoblastoma cell line. Phosphorylated in vitro by host protein kinase C or mitogen-activated protein kinase. N-acetylated in insect cells.

The protein localises to the host cytoplasm. It is found in the host nucleus. It localises to the host mitochondrion. Multifunctional protein that plays a role in silencing host antiviral defenses and promoting viral transcription. Does not seem to be essential for HBV infection. May be directly involved in development of cirrhosis and liver cancer (hepatocellular carcinoma). Most of cytosolic activities involve modulation of cytosolic calcium. The effect on apoptosis is controversial depending on the cell types in which the studies have been conducted. May induce apoptosis by localizing in mitochondria and causing loss of mitochondrial membrane potential. May also modulate apoptosis by binding host CFLAR, a key regulator of the death-inducing signaling complex (DISC). Promotes viral transcription by using the host E3 ubiquitin ligase DDB1 to target the SMC5-SMC6 complex to proteasomal degradation. This host complex would otherwise bind to viral episomal DNA, and prevents its transcription. Moderately stimulates transcription of many different viral and cellular transcription elements. Promoters and enhancers stimulated by HBx contain DNA binding sites for NF-kappa-B, AP-1, AP-2, c-EBP, ATF/CREB, or the calcium-activated factor NF-AT. This chain is Protein X, found in Ground squirrel hepatitis virus (strain 27) (GSHV).